Consider the following 560-residue polypeptide: Trans-activating transcriptional regulatory protein (560 aa).

Disordered stretches follow at residues Met1–Asn25 and Thr99–Lys134.

This sequence belongs to the nucleopolyhedrovirus IE-1 protein family.

Functionally, regulatory transcriptional protein, which trans-activates gene expression from early baculovirus promoters. Can also trans-activate its own promoter, suggesting that it is autoregulated during normal infection of insect cells. This is Trans-activating transcriptional regulatory protein (IE1) from Orgyia pseudotsugata (Douglas-fir tussock moth).